The primary structure comprises 603 residues: Elongation factor 4 (603 aa).

The tr-type G domain occupies 7–189 (SRIRNFSIIA…SIVQLVPPPQ (183 aa)). GTP is bound by residues 19–24 (DHGKST) and 136–139 (NKID).

Belongs to the TRAFAC class translation factor GTPase superfamily. Classic translation factor GTPase family. LepA subfamily.

It is found in the cell inner membrane. The catalysed reaction is GTP + H2O = GDP + phosphate + H(+). Functionally, required for accurate and efficient protein synthesis under certain stress conditions. May act as a fidelity factor of the translation reaction, by catalyzing a one-codon backward translocation of tRNAs on improperly translocated ribosomes. Back-translocation proceeds from a post-translocation (POST) complex to a pre-translocation (PRE) complex, thus giving elongation factor G a second chance to translocate the tRNAs correctly. Binds to ribosomes in a GTP-dependent manner. This Microcystis aeruginosa (strain NIES-843 / IAM M-2473) protein is Elongation factor 4.